Reading from the N-terminus, the 340-residue chain is UPF0324 membrane protein BA_5405/GBAA_5405/BAS5024 (340 aa).

Helical transmembrane passes span Phe13 to Leu35, Ile40 to Gly59, Val99 to Thr118, Gly128 to Val150, Thr157 to Tyr179, Tyr189 to Gly211, Ala218 to Phe240, Leu255 to Pro277, Val279 to Leu301, and Phe316 to Gly338.

Belongs to the UPF0324 family.

The protein resides in the cell membrane. This Bacillus anthracis protein is UPF0324 membrane protein BA_5405/GBAA_5405/BAS5024.